A 544-amino-acid chain; its full sequence is Chaperonin GroEL (544 aa).

Residues 29–32, Lys-50, 86–90, Gly-414, 477–479, and Asp-493 each bind ATP; these read TMGP, DGTTT, and NAA. The tract at residues 525-544 is disordered; sequence DKPAMPSMPDMGGMGMPGMM.

Belongs to the chaperonin (HSP60) family. As to quaternary structure, forms a cylinder of 14 subunits composed of two heptameric rings stacked back-to-back. Interacts with the co-chaperonin GroES.

The protein resides in the cytoplasm. It carries out the reaction ATP + H2O + a folded polypeptide = ADP + phosphate + an unfolded polypeptide.. Its function is as follows. Together with its co-chaperonin GroES, plays an essential role in assisting protein folding. The GroEL-GroES system forms a nano-cage that allows encapsulation of the non-native substrate proteins and provides a physical environment optimized to promote and accelerate protein folding. The sequence is that of Chaperonin GroEL from Aliarcobacter butzleri (strain RM4018) (Arcobacter butzleri).